Consider the following 751-residue polypeptide: MALTISISCFSSYFVSLLLLVLSSFSFVCFSLSTVSISHISNQTLVCALNNHSYLQCSSFPLNSIPFSLTGNLRNRRFSGVVSGNGFVCGLISRLDSNTSTLLCWRFSVDGTNMLHKRIYHGPELEELEAGNFRICGVERVSRRLRCWQPYYLPRPDNYRSIALGDNFFCGLSQPPGMISCEGIAKVPSGDHYIAIAAGSRQACAITVDNDVECWGQTQSLPREKFLALAVGEDRGCGVRWSNGTVVCWGNNNNFSLPQTLKDIHFTSIYAKGPMFCGVATRNYTLICWGNENFKSGVFTPFQGLISQVVMPGPCRRECPYRPLSGSQSLCGNELMICDLKRNDGEFPDTRAQNSKNKTWSRRNIAFLVVGCVGTFSLLLVISFLIFKSHCRCRVHDSGRLDDTRTIDIPKLEKRLCTLASLGNPGQLMEFSIDELALATDGFSVRFHLGIGSFGSVYQGVLSDGRHVAIKRAELTNPTLSGTTMRHRRADKDSAFVNELESMSRLNHKNLVRLLGFYEDTEERILVYEYMKNGSLADHLHNPQFDPLSWQTRLMIALDAARGIQYLHEFIVPPVIHRDIKSSNILLDATWTAKVSDFGLSQMGPTEEDDVSHLSLHAAGTLGYIDPEYYKFQQLTTKSDVYSFGVVLLELLSGHKAIHNNEDENPRNLVEYVVPYILLDEAHRILDQRIPPPTPYEIEAVAHVGYLAAECLMPCSRKRPSMVEVVSKLESALAACLTAPKTETVSRSNTY.

The first 31 residues, 1 to 31, serve as a signal peptide directing secretion; the sequence is MALTISISCFSSYFVSLLLLVLSSFSFVCFS. Over 32 to 366 the chain is Extracellular; the sequence is LSTVSISHIS…NKTWSRRNIA (335 aa). N-linked (GlcNAc...) asparagine glycosylation is found at Asn42, Asn51, Asn98, Asn243, Asn254, Asn283, and Asn357. Residues 367–387 form a helical membrane-spanning segment; that stretch reads FLVVGCVGTFSLLLVISFLIF. Residues 388–751 lie on the Cytoplasmic side of the membrane; it reads KSHCRCRVHD…TETVSRSNTY (364 aa). Residues 443 to 733 form the Protein kinase domain; that stretch reads FSVRFHLGIG…EVVSKLESAL (291 aa). Residues 449-457 and Lys471 contribute to the ATP site; that span reads LGIGSFGSV. Asp579 functions as the Proton acceptor in the catalytic mechanism.

It belongs to the protein kinase superfamily. Ser/Thr protein kinase family. As to quaternary structure, homodimer. In terms of tissue distribution, expressed in roots, leaves, especially in trichomes, shoot apical meristems (SAM), and, to a lower extent, in floral buds.

Its subcellular location is the membrane. It carries out the reaction L-seryl-[protein] + ATP = O-phospho-L-seryl-[protein] + ADP + H(+). The enzyme catalyses L-threonyl-[protein] + ATP = O-phospho-L-threonyl-[protein] + ADP + H(+). The protein is Serine/threonine-protein kinase-like protein CCR4 (CCR4) of Arabidopsis thaliana (Mouse-ear cress).